The following is a 311-amino-acid chain: Olfactory receptor 10G4 (311 aa).

Residues 1–23 are Extracellular-facing; the sequence is MSNASLVTAFILTGLPHAPGLDA. The N-linked (GlcNAc...) asparagine glycan is linked to asparagine 3. Residues 24–44 form a helical membrane-spanning segment; the sequence is LLFGIFLVVYVLTVLGNLLIL. The Cytoplasmic portion of the chain corresponds to 45–52; it reads LVIRVDSH. A helical membrane pass occupies residues 53–73; the sequence is LHTPMYYFLTNLSFIDMWFST. Over 74–98 the chain is Extracellular; sequence VTVPKMLMTLVSPSGRAISFHSCVA. Cysteine 96 and cysteine 188 are disulfide-bonded. Residues 99–119 form a helical membrane-spanning segment; the sequence is QLYFFHFLGSTECFLYTVMSY. Residues 120–138 are Cytoplasmic-facing; it reads DRYLAISYPLRYTSMMSGS. The helical transmembrane segment at 139–159 threads the bilayer; that stretch reads RCALLATGTWLSGSLHSAVQT. Residues 160-196 lie on the Extracellular side of the membrane; it reads ILTFHLPYCGPNQIQHYFCDAPPILKLACADTSANVM. A helical membrane pass occupies residues 197-216; sequence VIFVDIGIVASGCFVLIVLS. The Cytoplasmic portion of the chain corresponds to 217-236; sequence YVSIVCSILRIRTSDGRRRA. The chain crosses the membrane as a helical span at residues 237 to 257; that stretch reads FQTCASHCIVVLCFFVPCVVI. Residues 258–268 are Extracellular-facing; that stretch reads YLRPGSMDAMD. The helical transmembrane segment at 269-289 threads the bilayer; that stretch reads GVVAIFYTVLTPLLNPVVYTL. Residues 290-311 lie on the Cytoplasmic side of the membrane; sequence RNKEVKKAVLKLRDKVAHPQRK.

The protein belongs to the G-protein coupled receptor 1 family.

The protein localises to the cell membrane. Odorant receptor. This is Olfactory receptor 10G4 (OR10G4) from Homo sapiens (Human).